Reading from the N-terminus, the 71-residue chain is Large ribosomal subunit protein uL30 (71 aa).

Belongs to the universal ribosomal protein uL30 family. Part of the 50S ribosomal subunit.

This chain is Large ribosomal subunit protein uL30, found in Mycobacterium leprae (strain TN).